The primary structure comprises 250 residues: DNA repair protein RecO (250 aa).

It belongs to the RecO family.

In terms of biological role, involved in DNA repair and RecF pathway recombination. The protein is DNA repair protein RecO of Staphylococcus aureus (strain COL).